Here is a 537-residue protein sequence, read N- to C-terminus: Probable sterol O-acyltransferase 1 (537 aa).

4 consecutive transmembrane segments (helical) span residues 98–118 (FRGF…QLYA), 140–160 (FFVL…SYGL), 174–194 (LGYT…VYWV), and 199–219 (FPIV…MKQF). N-linked (GlcNAc...) asparagine glycosylation occurs at Asn250. Helical transmembrane passes span 344 to 364 (FGLL…SAVA) and 384 to 404 (IMFP…DCIL). The short motif at 418–424 (FYGAWWN) is the FYXDWWN motif element. Transmembrane regions (helical) follow at residues 462–482 (AVLL…LLAT) and 517–537 (VFFW…YIVF). The active site involves His474.

This sequence belongs to the membrane-bound acyltransferase family. Sterol o-acyltransferase subfamily.

The protein resides in the endoplasmic reticulum membrane. Sterol O-acyltransferase that catalyzes the formation of stery esters. The chain is Probable sterol O-acyltransferase 1 (are1) from Schizosaccharomyces pombe (strain 972 / ATCC 24843) (Fission yeast).